The chain runs to 224 residues: Deoxyribose-phosphate aldolase (224 aa).

The active-site Proton donor/acceptor is the Asp94. Lys156 acts as the Schiff-base intermediate with acetaldehyde in catalysis. The active-site Proton donor/acceptor is the Lys184.

The protein belongs to the DeoC/FbaB aldolase family. DeoC type 1 subfamily.

It localises to the cytoplasm. The enzyme catalyses 2-deoxy-D-ribose 5-phosphate = D-glyceraldehyde 3-phosphate + acetaldehyde. It participates in carbohydrate degradation; 2-deoxy-D-ribose 1-phosphate degradation; D-glyceraldehyde 3-phosphate and acetaldehyde from 2-deoxy-alpha-D-ribose 1-phosphate: step 2/2. Catalyzes a reversible aldol reaction between acetaldehyde and D-glyceraldehyde 3-phosphate to generate 2-deoxy-D-ribose 5-phosphate. The protein is Deoxyribose-phosphate aldolase of Methanocella arvoryzae (strain DSM 22066 / NBRC 105507 / MRE50).